The following is a 145-amino-acid chain: 3-dehydroquinate dehydratase (145 aa).

The active-site Proton acceptor is the Tyr-23. The substrate site is built by Asn-75, His-81, and Asp-88. Residue His-101 is the Proton donor of the active site. Residues 102–103 (IS) and Arg-112 contribute to the substrate site.

Belongs to the type-II 3-dehydroquinase family. Homododecamer.

It carries out the reaction 3-dehydroquinate = 3-dehydroshikimate + H2O. It participates in metabolic intermediate biosynthesis; chorismate biosynthesis; chorismate from D-erythrose 4-phosphate and phosphoenolpyruvate: step 3/7. Its function is as follows. Catalyzes a trans-dehydration via an enolate intermediate. The polypeptide is 3-dehydroquinate dehydratase (Caldicellulosiruptor bescii (strain ATCC BAA-1888 / DSM 6725 / KCTC 15123 / Z-1320) (Anaerocellum thermophilum)).